A 208-amino-acid polypeptide reads, in one-letter code: LexA repressor (208 aa).

The H-T-H motif DNA-binding region spans 28 to 48 (RAEIARELGFRSANAAEEHLK). Residues serine 125 and lysine 162 each act as for autocatalytic cleavage activity in the active site.

Belongs to the peptidase S24 family. Homodimer.

It catalyses the reaction Hydrolysis of Ala-|-Gly bond in repressor LexA.. Functionally, represses a number of genes involved in the response to DNA damage (SOS response), including recA and lexA. In the presence of single-stranded DNA, RecA interacts with LexA causing an autocatalytic cleavage which disrupts the DNA-binding part of LexA, leading to derepression of the SOS regulon and eventually DNA repair. The chain is LexA repressor from Aliivibrio fischeri (strain MJ11) (Vibrio fischeri).